The sequence spans 242 residues: Pyridoxine 5'-phosphate synthase (242 aa).

Asn-6 lines the 3-amino-2-oxopropyl phosphate pocket. 8 to 9 is a 1-deoxy-D-xylulose 5-phosphate binding site; it reads DH. Residue Arg-17 participates in 3-amino-2-oxopropyl phosphate binding. His-42 acts as the Proton acceptor in catalysis. 2 residues coordinate 1-deoxy-D-xylulose 5-phosphate: Arg-44 and His-49. Glu-69 acts as the Proton acceptor in catalysis. 1-deoxy-D-xylulose 5-phosphate is bound at residue Thr-99. His-193 acts as the Proton donor in catalysis. Residues Gly-194 and 217–218 each bind 3-amino-2-oxopropyl phosphate; that span reads GH.

Belongs to the PNP synthase family. In terms of assembly, homooctamer; tetramer of dimers.

Its subcellular location is the cytoplasm. It catalyses the reaction 3-amino-2-oxopropyl phosphate + 1-deoxy-D-xylulose 5-phosphate = pyridoxine 5'-phosphate + phosphate + 2 H2O + H(+). The protein operates within cofactor biosynthesis; pyridoxine 5'-phosphate biosynthesis; pyridoxine 5'-phosphate from D-erythrose 4-phosphate: step 5/5. Its function is as follows. Catalyzes the complicated ring closure reaction between the two acyclic compounds 1-deoxy-D-xylulose-5-phosphate (DXP) and 3-amino-2-oxopropyl phosphate (1-amino-acetone-3-phosphate or AAP) to form pyridoxine 5'-phosphate (PNP) and inorganic phosphate. The polypeptide is Pyridoxine 5'-phosphate synthase (Aquifex aeolicus (strain VF5)).